A 391-amino-acid chain; its full sequence is GTPase Obg (391 aa).

In terms of domain architecture, Obg spans 1–159; sequence MKFIDEALIR…RDLQLELMLL (159 aa). One can recognise an OBG-type G domain in the interval 160-333; that stretch reads ADVGMLGLPN…LTRDIMDFIE (174 aa). GTP is bound by residues 166-173, 191-195, 213-216, 283-286, and 314-316; these read GLPNAGKS, FTTLV, DIPG, NKID, and SAA. Mg(2+)-binding residues include Ser-173 and Thr-193. A disordered region spans residues 361 to 391; it reads QNPITEDDWDDLDDDGWTEEDDEGVEFIYKP. Residues 365-385 are compositionally biased toward acidic residues; that stretch reads TEDDWDDLDDDGWTEEDDEGV.

It belongs to the TRAFAC class OBG-HflX-like GTPase superfamily. OBG GTPase family. Monomer. The cofactor is Mg(2+).

The protein localises to the cytoplasm. In terms of biological role, an essential GTPase which binds GTP, GDP and possibly (p)ppGpp with moderate affinity, with high nucleotide exchange rates and a fairly low GTP hydrolysis rate. Plays a role in control of the cell cycle, stress response, ribosome biogenesis and in those bacteria that undergo differentiation, in morphogenesis control. The chain is GTPase Obg from Glaesserella parasuis serovar 5 (strain SH0165) (Haemophilus parasuis).